The sequence spans 98 residues: MKINQLAVAGTLESGDVMIRIAPLDTQDIDLQINSSVEKQFGEAIRATILEVLSRYDVRGVQLNVDDKGALDCILRARLETLLARASGIAALPWEDRQ.

Ser-14 is subject to O-(phosphoribosyl dephospho-coenzyme A)serine.

Belongs to the CitD family. As to quaternary structure, oligomer with a subunit composition of (alpha,beta,gamma)6.

The protein resides in the cytoplasm. In terms of biological role, covalent carrier of the coenzyme of citrate lyase. The sequence is that of Citrate lyase acyl carrier protein from Salmonella arizonae (strain ATCC BAA-731 / CDC346-86 / RSK2980).